The primary structure comprises 196 residues: Large ribosomal subunit protein bL9c (196 aa).

Residues 1–41 (MASTTSTLSLSWSNSFHSFAGAISEPQKSPENCRVMLPIVA) constitute a chloroplast transit peptide.

As to quaternary structure, component of the chloroplast large ribosomal subunit (LSU). Mature 70S chloroplast ribosomes of higher plants consist of a small (30S) and a large (50S) subunit. The 30S small subunit contains 1 molecule of ribosomal RNA (16S rRNA) and 24 different proteins. The 50S large subunit contains 3 rRNA molecules (23S, 5S and 4.5S rRNA) and 33 different proteins.

Its subcellular location is the plastid. The protein resides in the chloroplast. In terms of biological role, component of the chloroplast ribosome (chloro-ribosome), a dedicated translation machinery responsible for the synthesis of chloroplast genome-encoded proteins, including proteins of the transcription and translation machinery and components of the photosynthetic apparatus. This Spinacia oleracea (Spinach) protein is Large ribosomal subunit protein bL9c (RPL9).